Reading from the N-terminus, the 452-residue chain is MIDFIDYIQLSFSDATRWNRDNSYTALTDTANALLDFSIPERLRVHLSSLSTPQFATTYTLGTVGLIDGSISYLFSTLPLQTTQSRSTLIPLRKLVPGYRQIHPPLAPESWDSDGPGHEGSDGQEDETTPWKRRRETLLHAILHLPPPTTLNGLFLRRLSPTTQLSVAVCSTQAKPLSKSTPQASILTQLSHDTGKYSAEFLFSTDNALLGFKGLYNFGPDPRDRTNAQRPQRASQSVSLLSAGGEMYYSPLSSVVGLSTGLRFTTLPAASETLHSPSSSAYPAPSPISTFPYTLTLTLTPLTGSLSTTYSLLASPNLAFSSRFGFNVYSWESEMVAGCELWRQKRKPYPYVSGEKDDLAWAKRKMGLLPPLPAPPTPAKRMDLTAGAGESVESDSVIKLRVDQSLNIRLLWEGRVKDLLVSAGVGLGPTSLSTGGAAYGWTGVGVSVLYST.

Positions 105–130 are disordered; sequence PLAPESWDSDGPGHEGSDGQEDETTP.

Belongs to the MDM10 family. As to quaternary structure, component of the ER-mitochondria encounter structure (ERMES) or MDM complex, composed of MMM1, MDM10, MDM12 and MDM34. Associates with the mitochondrial outer membrane sorting assembly machinery SAM(core) complex.

Its subcellular location is the mitochondrion outer membrane. Functionally, component of the ERMES/MDM complex, which serves as a molecular tether to connect the endoplasmic reticulum and mitochondria. Components of this complex are involved in the control of mitochondrial shape and protein biogenesis and may function in phospholipid exchange. MDM10 is involved in the late assembly steps of the general translocase of the mitochondrial outer membrane (TOM complex). Functions in the TOM40-specific route of the assembly of outer membrane beta-barrel proteins, including the association of TOM40 with the receptor TOM22 and small TOM proteins. Can associate with the SAM(core) complex as well as the MDM12-MMM1 complex, both involved in late steps of the major beta-barrel assembly pathway, that is responsible for biogenesis of all outer membrane beta-barrel proteins. May act as a switch that shuttles between both complexes and channels precursor proteins into the TOM40-specific pathway. Plays a role in mitochondrial morphology and in the inheritance of mitochondria. The sequence is that of Mitochondrial distribution and morphology protein 10 from Uncinocarpus reesii (strain UAMH 1704).